A 345-amino-acid chain; its full sequence is S-adenosylmethionine:tRNA ribosyltransferase-isomerase (345 aa).

It belongs to the QueA family. Monomer.

The protein resides in the cytoplasm. The catalysed reaction is 7-aminomethyl-7-carbaguanosine(34) in tRNA + S-adenosyl-L-methionine = epoxyqueuosine(34) in tRNA + adenine + L-methionine + 2 H(+). Its pathway is tRNA modification; tRNA-queuosine biosynthesis. Functionally, transfers and isomerizes the ribose moiety from AdoMet to the 7-aminomethyl group of 7-deazaguanine (preQ1-tRNA) to give epoxyqueuosine (oQ-tRNA). The polypeptide is S-adenosylmethionine:tRNA ribosyltransferase-isomerase (Anaeromyxobacter sp. (strain Fw109-5)).